Here is a 24-residue protein sequence, read N- to C-terminus: Ascaphin-3 (24 aa).

As to expression, expressed by the skin glands.

The protein resides in the secreted. Its function is as follows. Antimicrobial peptide that shows higher potency against Gram-negative bacteria than against Gram-positive bacteria. Has a very week hemolytic activity. The sequence is that of Ascaphin-3 from Ascaphus truei (Coastal tailed frog).